The sequence spans 686 residues: Protein MxiA (686 aa).

The next 6 helical transmembrane spans lie at 28-52 (LIIP…ILVF), 105-129 (FVIG…FIVI), 197-216 (AIAG…SVGM), 232-256 (ILTI…GFIV), 274-292 (IFGN…LAIG), and 299-315 (FFVF…LFYY).

This sequence belongs to the FHIPEP (flagella/HR/invasion proteins export pore) family.

It localises to the cell inner membrane. In terms of biological role, necessary for the secretion of IPA invasins. The sequence is that of Protein MxiA (mxiA) from Shigella flexneri.